Here is a 495-residue protein sequence, read N- to C-terminus: Cardiolipin synthase A (495 aa).

Transmembrane regions (helical) follow at residues 9–29 (IEVL…WLIT) and 46–66 (MAWL…YLLL). 2 consecutive PLD phosphodiesterase domains span residues 227 to 254 (MDLR…IDPK) and 408 to 435 (EGGL…DMRS). Residues H232, K234, D239, H413, K415, and D420 contribute to the active site.

This sequence belongs to the phospholipase D family. Cardiolipin synthase subfamily. ClsA sub-subfamily.

It localises to the cell membrane. It carries out the reaction 2 a 1,2-diacyl-sn-glycero-3-phospho-(1'-sn-glycerol) = a cardiolipin + glycerol. In terms of biological role, catalyzes the reversible phosphatidyl group transfer from one phosphatidylglycerol molecule to another to form cardiolipin (CL) (diphosphatidylglycerol) and glycerol. This Wigglesworthia glossinidia brevipalpis protein is Cardiolipin synthase A.